The following is a 143-amino-acid chain: Transcriptional regulator MraZ (143 aa).

2 SpoVT-AbrB domains span residues 5-47 (EYHH…PIEE) and 76-119 (AMES…SAER).

It belongs to the MraZ family. Forms oligomers.

Its subcellular location is the cytoplasm. It is found in the nucleoid. In Lactobacillus johnsonii (strain CNCM I-12250 / La1 / NCC 533), this protein is Transcriptional regulator MraZ.